We begin with the raw amino-acid sequence, 490 residues long: Bifunctional protein HldE (490 aa).

A ribokinase region spans residues 1 to 330 (MNNFDTLLQS…RKILPHASLA (330 aa)). 205 to 208 (NRKE) contacts ATP. Residue Asp275 is part of the active site. Residues 358–490 (FTNGCFDILH…LVEKAREGTS (133 aa)) are cytidylyltransferase.

It in the N-terminal section; belongs to the carbohydrate kinase PfkB family. The protein in the C-terminal section; belongs to the cytidylyltransferase family. Homodimer.

The catalysed reaction is D-glycero-beta-D-manno-heptose 7-phosphate + ATP = D-glycero-beta-D-manno-heptose 1,7-bisphosphate + ADP + H(+). The enzyme catalyses D-glycero-beta-D-manno-heptose 1-phosphate + ATP + H(+) = ADP-D-glycero-beta-D-manno-heptose + diphosphate. It functions in the pathway nucleotide-sugar biosynthesis; ADP-L-glycero-beta-D-manno-heptose biosynthesis; ADP-L-glycero-beta-D-manno-heptose from D-glycero-beta-D-manno-heptose 7-phosphate: step 1/4. The protein operates within nucleotide-sugar biosynthesis; ADP-L-glycero-beta-D-manno-heptose biosynthesis; ADP-L-glycero-beta-D-manno-heptose from D-glycero-beta-D-manno-heptose 7-phosphate: step 3/4. Its function is as follows. Catalyzes the phosphorylation of D-glycero-D-manno-heptose 7-phosphate at the C-1 position to selectively form D-glycero-beta-D-manno-heptose-1,7-bisphosphate. Functionally, catalyzes the ADP transfer from ATP to D-glycero-beta-D-manno-heptose 1-phosphate, yielding ADP-D-glycero-beta-D-manno-heptose. The protein is Bifunctional protein HldE of Rhodopseudomonas palustris (strain HaA2).